An 840-amino-acid chain; its full sequence is E3 ubiquitin-protein ligase SH3RF1 (840 aa).

The segment at 12–53 (CPVCLERLDASAKVLPCQHTFCKRCLLGIVGSRNELRCPECR) adopts an RING-type zinc-finger fold. A disordered region spans residues 105-129 (VTCSPKDGPSSQGGPQPRAQAWSPP). SH3 domains lie at 134-193 (PQLP…IIKP) and 196-259 (QPPP…FNSA). 6 disordered regions span residues 267–324 (DQPP…RHSM), 394–442 (TLNP…PRPS), 516–545 (GPAS…VAGG), 578–633 (QARS…AASG), 652–723 (AASL…LGAE), and 744–773 (MAPG…SLGP). Residues 273–282 (GVAAGEGALA) are compositionally biased toward low complexity. The span at 283–292 (TTPSSTTTKQ) shows a compositional bias: polar residues. The segment at 292–362 (QPDGKKNTKK…APSQVHISTT (71 aa)) is interaction with RAC1. A Phosphoserine modification is found at S304. Low complexity-rich tracts occupy residues 307-320 (SLSM…AAQQ) and 405-424 (QAAT…GPRP). The interaction with AKT2 stretch occupies residues 434 to 537 (HPRPQPRPSV…PSTGGPAQKP (104 aa)). Residues 439–500 (PRPSVYVAIY…PGNYVAPVTR (62 aa)) enclose the SH3 3 domain. Pro residues predominate over residues 616-625 (SPQPPAPLGP). Positions 681–692 (RPDKDGKKEKKG) are enriched in basic and acidic residues. S709 is subject to Phosphoserine. In terms of domain architecture, SH3 4 spans 781–840 (AVCERHRVVVSYPPQSEAELELKEGDIVFVHKKREDGWFKGTLQRNGKTGLFPGSFVENI).

This sequence belongs to the SH3RF family. As to quaternary structure, interacts with RAC1; in a GTP-dependent manner. Interacts with MAP3K10/MLK2 and MAP3K11/MLK3. Interacts with MAPK8IP; this interaction leads to the PJAC complex (POSH-JIP or SH3RF1/MAPK8IP apoptotic complex) with a 1:1 ratio. Interacts with SIAH1. Interacts with HERP1. Probably part of a signaling complex that may contain SH3RF1, MAPK8IP, DLK1, MAP2K4/MKK4, MAP2K7/MKK7, MAPK8/JNK1, MAPK9/JNK2, AKT1 and AKT2. Found in a complex with RAC2, MAP3K7/TAK1, MAP2K7/MKK7, MAPK8IP1/JIP1, MAPK8/JNK1 and MAPK9/JNK2. Found in a complex with RAC1, MAP3K11/MLK3, MAP2K7/MKK7, MAPK8IP1/JIP1 and MAPK8/JNK1. Interacts with SH3RF2. In terms of processing, phosphorylated at Ser-304 by AKT1 and AKT2. When phosphorylated, it has reduced ability to bind Rac. Post-translationally, autoubiquitinated. Ubiquitinated by SH3RF2, leading to proteasome-mediated degradation.

The protein resides in the cytoplasm. It localises to the perinuclear region. The protein localises to the cell projection. Its subcellular location is the lamellipodium. It is found in the golgi apparatus. The protein resides in the trans-Golgi network. The catalysed reaction is S-ubiquitinyl-[E2 ubiquitin-conjugating enzyme]-L-cysteine + [acceptor protein]-L-lysine = [E2 ubiquitin-conjugating enzyme]-L-cysteine + N(6)-ubiquitinyl-[acceptor protein]-L-lysine.. It participates in protein modification; protein ubiquitination. Has E3 ubiquitin-protein ligase activity. In the absence of an external substrate, it can catalyze self-ubiquitination. Stimulates ubiquitination of potassium channel KCNJ1, enhancing it's dynamin-dependent and clathrin-independent endocytosis. Acts as a scaffold protein that coordinates with MAPK8IP1/JIP1 in organizing different components of the JNK pathway, including RAC1 or RAC2, MAP3K11/MLK3 or MAP3K7/TAK1, MAP2K7/MKK7, MAPK8/JNK1 and/or MAPK9/JNK2 into a functional multiprotein complex to ensure the effective activation of the JNK signaling pathway. Regulates the differentiation of CD4(+) and CD8(+) T-cells and promotes T-helper 1 (Th1) cell differentiation. Regulates the activation of MAPK8/JNK1 and MAPK9/JNK2 in CD4(+) T-cells and the activation of MAPK8/JNK1 in CD8(+) T-cells. Plays a crucial role in the migration of neocortical neurons in the developing brain. Controls proper cortical neuronal migration and the formation of proximal cytoplasmic dilation in the leading process (PCDLP) in migratory neocortical neurons by regulating the proper localization of activated RAC1 and F-actin assembly. This is E3 ubiquitin-protein ligase SH3RF1 (SH3RF1) from Bos taurus (Bovine).